The primary structure comprises 339 residues: UDP-N-acetylenolpyruvoylglucosamine reductase (339 aa).

The FAD-binding PCMH-type domain occupies 19 to 189; the sequence is VDVQARLFAQ…LRVRFKLSRE (171 aa). Arg166 is a catalytic residue. Ser239 acts as the Proton donor in catalysis. Residue Glu335 is part of the active site.

This sequence belongs to the MurB family. Requires FAD as cofactor.

Its subcellular location is the cytoplasm. It catalyses the reaction UDP-N-acetyl-alpha-D-muramate + NADP(+) = UDP-N-acetyl-3-O-(1-carboxyvinyl)-alpha-D-glucosamine + NADPH + H(+). It participates in cell wall biogenesis; peptidoglycan biosynthesis. Its function is as follows. Cell wall formation. This is UDP-N-acetylenolpyruvoylglucosamine reductase from Pseudomonas syringae pv. tomato (strain ATCC BAA-871 / DC3000).